The following is a 677-amino-acid chain: DNA ligase (677 aa).

NAD(+)-binding positions include 34–38 (DAEYD), 83–84 (SL), and Glu117. Lys119 (N6-AMP-lysine intermediate) is an active-site residue. Residues Arg140, Glu175, Lys283, and Lys307 each contribute to the NAD(+) site. Zn(2+) contacts are provided by Cys401, Cys404, Cys419, and Cys425. The 84-residue stretch at 594–677 (SHLSLLHGKT…QYISPNTNEN (84 aa)) folds into the BRCT domain.

This sequence belongs to the NAD-dependent DNA ligase family. LigA subfamily. The cofactor is Mg(2+). Mn(2+) is required as a cofactor.

The catalysed reaction is NAD(+) + (deoxyribonucleotide)n-3'-hydroxyl + 5'-phospho-(deoxyribonucleotide)m = (deoxyribonucleotide)n+m + AMP + beta-nicotinamide D-nucleotide.. Its function is as follows. DNA ligase that catalyzes the formation of phosphodiester linkages between 5'-phosphoryl and 3'-hydroxyl groups in double-stranded DNA using NAD as a coenzyme and as the energy source for the reaction. It is essential for DNA replication and repair of damaged DNA. This is DNA ligase from Ehrlichia canis (strain Jake).